A 408-amino-acid chain; its full sequence is RUN domain-containing protein 3B (408 aa).

Residues 1 to 25 (MASRSLGGLSGSRGGGGGGGGKKSL) form a disordered region. The span at 8-22 (GLSGSRGGGGGGGGK) shows a compositional bias: gly residues. An Omega-N-methylarginine modification is found at Arg13. Residues 58–190 (DDSSPEFNNF…IDFSFCLKGE (133 aa)) form the RUN domain. A disordered region spans residues 213–238 (DSISSDEEELRTFGSSDSESSTPENV). Residues Ser216 and Ser217 each carry the phosphoserine modification. Residues 225–236 (FGSSDSESSTPE) show a composition bias toward polar residues. Positions 301-326 (AHKLEKEQLEYIIVELQDQLKSYQSL) form a coiled coil. A disordered region spans residues 337 to 359 (QASLDPSHSQEGDGKQDSLNFIG).

Belongs to the RUNDC3 family. As to quaternary structure, interacts with RAP2A.

This is RUN domain-containing protein 3B (Rundc3b) from Mus musculus (Mouse).